A 72-amino-acid polypeptide reads, in one-letter code: Kappa-conotoxin PVIIA (72 aa).

Positions 1-22 (MKLTCVVIVVVLFLTACQLITA) are cleaved as a signal peptide. Positions 23 to 45 (DDSRRTQKHRALRSTTKLSLSTR) are excised as a propeptide. 3 disulfide bridges follow: cysteine 46–cysteine 61, cysteine 53–cysteine 65, and cysteine 60–cysteine 71. Proline 49 carries the 4-hydroxyproline modification.

The protein belongs to the conotoxin O1 superfamily. This toxin is not amidated at the C-terminal Val residue. In terms of tissue distribution, expressed by the venom duct.

The protein localises to the secreted. Its function is as follows. Kappa-conotoxins bind and inhibit voltage-gated potassium channels (Kv). This toxin inhibits the drosophila Shaker channel (IC(50)=57-80 nM). In vivo, when tested in fish, this toxin induces hyperactivity, followed by continuous contraction and extension of major fins, without immobilization or death. Injection of this peptide together with the delta-conotoxin PVIA causes the sudden tetanus of prey (STOP) syndrome, which is a single, lethal 'fin-pop' in envenomed fish. When tested in mice, induces hyperactivity. The polypeptide is Kappa-conotoxin PVIIA (Conus purpurascens (Purple cone)).